We begin with the raw amino-acid sequence, 149 residues long: Large ribosomal subunit protein uL13 (149 aa).

The protein belongs to the universal ribosomal protein uL13 family. As to quaternary structure, part of the 50S ribosomal subunit.

Its function is as follows. This protein is one of the early assembly proteins of the 50S ribosomal subunit, although it is not seen to bind rRNA by itself. It is important during the early stages of 50S assembly. This is Large ribosomal subunit protein uL13 from Bifidobacterium adolescentis (strain ATCC 15703 / DSM 20083 / NCTC 11814 / E194a).